The chain runs to 500 residues: NAD(P)H-quinone oxidoreductase chain 4, chloroplastic (500 aa).

Transmembrane regions (helical) follow at residues 4-24 (FPWL…LFFL), 35-55 (YTLC…CYHF), 87-107 (FGPI…AWPV), 134-154 (LLLF…LLSM), 167-187 (FILY…GIGL), 208-228 (ALEI…SPII), 242-262 (HYST…YGLV), 272-292 (AHSI…VYAA), 305-325 (IAYS…SITD), 330-350 (GALL…FLAG), 364-384 (MGGM…LSMA), 386-406 (LALP…GIIT), 416-436 (ILIT…SLSM), and 462-482 (LFVS…PDFL).

The protein belongs to the complex I subunit 4 family.

The protein localises to the plastid. Its subcellular location is the chloroplast thylakoid membrane. The catalysed reaction is a plastoquinone + NADH + (n+1) H(+)(in) = a plastoquinol + NAD(+) + n H(+)(out). It catalyses the reaction a plastoquinone + NADPH + (n+1) H(+)(in) = a plastoquinol + NADP(+) + n H(+)(out). The polypeptide is NAD(P)H-quinone oxidoreductase chain 4, chloroplastic (Pelargonium hortorum (Common geranium)).